Consider the following 312-residue polypeptide: MTAQFEHVSVLMDETIDALAIKPDGIYMDGTFGRGGHSGQILARLGSEGRLQAIDQDPQAIKSAEKFADDPRFAIAHTRFSNLYGVAEQNDLIGKVDGILLDIGVSSPQLDDALRGFSFMKDGPLDMRMDPTTGRSAAQWLAEAELDDITHVIKKLGEEKFGKRIAHKVLEVREHTPITTTKQLADLVDEAVPVKDKFKHPATRTFQAIRIYINSELEEIQTALQSAIKVLKPGGRLVVISFHSLEDRIVKQFIRKQSRGETLPRGLPLTDAQINQNLTLKAVGKAIKPSAAEVERNPRSRSSVLRIAQRLG.

S-adenosyl-L-methionine contacts are provided by residues 35 to 37 (GGH), aspartate 55, phenylalanine 80, aspartate 102, and glutamine 109.

This sequence belongs to the methyltransferase superfamily. RsmH family.

The protein resides in the cytoplasm. The enzyme catalyses cytidine(1402) in 16S rRNA + S-adenosyl-L-methionine = N(4)-methylcytidine(1402) in 16S rRNA + S-adenosyl-L-homocysteine + H(+). Functionally, specifically methylates the N4 position of cytidine in position 1402 (C1402) of 16S rRNA. The protein is Ribosomal RNA small subunit methyltransferase H of Pseudoalteromonas translucida (strain TAC 125).